The chain runs to 807 residues: AP-5 complex subunit zeta-1 (807 aa).

Probably part of the adaptor protein complex 5 (AP-5) a tetramer composed of AP5B1, AP5M1, AP5S1 and AP5Z1. Interacts with ZFYVE26 and SPG11.

Its subcellular location is the cytoplasm. The protein resides in the nucleus. Its function is as follows. As part of AP-5, a probable fifth adaptor protein complex it may be involved in endosomal transport. In Mus musculus (Mouse), this protein is AP-5 complex subunit zeta-1 (Ap5z1).